Reading from the N-terminus, the 490-residue chain is Aspartyl/glutamyl-tRNA(Asn/Gln) amidotransferase subunit B (490 aa).

The protein belongs to the GatB/GatE family. GatB subfamily. In terms of assembly, heterotrimer of A, B and C subunits.

It carries out the reaction L-glutamyl-tRNA(Gln) + L-glutamine + ATP + H2O = L-glutaminyl-tRNA(Gln) + L-glutamate + ADP + phosphate + H(+). The enzyme catalyses L-aspartyl-tRNA(Asn) + L-glutamine + ATP + H2O = L-asparaginyl-tRNA(Asn) + L-glutamate + ADP + phosphate + 2 H(+). Allows the formation of correctly charged Asn-tRNA(Asn) or Gln-tRNA(Gln) through the transamidation of misacylated Asp-tRNA(Asn) or Glu-tRNA(Gln) in organisms which lack either or both of asparaginyl-tRNA or glutaminyl-tRNA synthetases. The reaction takes place in the presence of glutamine and ATP through an activated phospho-Asp-tRNA(Asn) or phospho-Glu-tRNA(Gln). The sequence is that of Aspartyl/glutamyl-tRNA(Asn/Gln) amidotransferase subunit B from Synechococcus sp. (strain JA-2-3B'a(2-13)) (Cyanobacteria bacterium Yellowstone B-Prime).